Consider the following 738-residue polypeptide: MPYLGSEDVVKELKKALCNPHIQADRLRYRNVIQRVIRHMTQGLDMSDVFMEMVKASATVDIVQKKLVYLYMGTYAPLKPDLALLAINTLCKDCSDPNPMVRGLALRSMCSLRMPGVQEYIQQPVVNGLRDKASYVRRVAVLGCAKMHNLHGDSEVDGALVNELYSLLRDQDPIVVVNCLRSLEEILKQEGGVVINKPIAHHLLNRMSKLDQWGQAEVLNFLLRYQPRSEEELFDILNLLDSYLKSSSTGVVMGATKLFLILAKKFPHVQTDVLVRVKGPLLAACSSESRELCFAALCHVRQVLHSLPGHFSSHYKKFFCSYSEPHYIKLQKVEVLCELVNDENVQQVLEELRGYCTDVAADFAQAAIFAIGSIAKTYTDQCVQILTELLGLRQEHITTVVVQTFRDLVWLCPQCTEAVCQALPGCEENIQDSEGKQALIWLLGVHGEKIPNAPYVLEDFVDNVKSETFPAVKMELLTALMRLVLSRPAECQDMLGRLLHYCIEEEKDMAVRDRGLFYYRLLLVGIDKVKQILCSPKSDPSLGLLEDQPERPVNSWASDFNTLAPVYGRAHWATISKCQQVERHRLELPHNASFATSGHLISEENKEGAQEPDSDTLMLVPNLQLTAEYFEKTWLSLRVSYQQVFPWQGEVQPDTLQMALKVVNIQTIAMSRAGAQPWKAYLSAQDDTGGLFLAELLLKPENSEMQISVKQSKARTESLHGFVSVLETVIGTVGDIKS.

Residues 534–600 (CSPKSDPSLG…NASFATSGHL (67 aa)) form a hinge region. Residues 601–738 (ISEENKEGAQ…VIGTVGDIKS (138 aa)) are ear; mediates interaction with TEPSIN.

The protein belongs to the adaptor complexes large subunit family. In terms of assembly, adaptor protein complex 4 (AP-4) is a heterotetramer composed of two large adaptins (epsilon-type subunit AP4E1 and beta-type subunit AP4B1), a medium adaptin (mu-type subunit AP4M1) and a small adaptin (sigma-type AP4S1). Interacts with TEPSIN; this interaction requires the presence of a functional AP-4 complex. Interacts with GRIA2; probably indirect it mediates the somatodendritic localization of GRIA2 in neurons.

The protein resides in the golgi apparatus. The protein localises to the trans-Golgi network membrane. Functionally, component of the adaptor protein complex 4 (AP-4). Adaptor protein complexes are vesicle coat components involved both in vesicle formation and cargo selection. They control the vesicular transport of proteins in different trafficking pathways. AP-4 forms a non clathrin-associated coat on vesicles departing the trans-Golgi network (TGN) and may be involved in the targeting of proteins from the trans-Golgi network (TGN) to the endosomal-lysosomal system. It is also involved in protein sorting to the basolateral membrane in epithelial cells and the proper asymmetric localization of somatodendritic proteins in neurons. AP-4 is involved in the recognition and binding of tyrosine-based sorting signals found in the cytoplasmic part of cargos, but may also recognize other types of sorting signal. The protein is AP-4 complex subunit beta-1 of Mus musculus (Mouse).